The primary structure comprises 200 residues: MGSDSEILNRELSKLSDEDLLACTKEELVNRLRKEESDKMSALIQRGRLIKEVNKQLQGHLLEIRELKVINQRLQEENQELRDLCCFLDDDRLKVKKLAREWQLFGHHAAKVMREDLGGYLKKLADLERMQDGLVKENLDLKELCLVLEEECVSRSDSSPGGSTDLNIPCMVARDVGDGSSSTGSVGSPDQLHLVCSPDD.

A coiled-coil region spans residues Leu-57–Leu-84. Positions Asp-178–Ser-188 are enriched in low complexity. Residues Asp-178–Asp-200 form a disordered region.

The protein belongs to the CCDC85 family.

Its subcellular location is the nucleus. It is found in the cytoplasm. The protein resides in the cytoskeleton. It localises to the microtubule organizing center. The protein localises to the centrosome. Its subcellular location is the cell junction. It is found in the adherens junction. Its function is as follows. Functions as a transcriptional repressor. May inhibit the activity of CTNNB1 in a TP53-dependent manner and thus regulate cell growth. May function in adipocyte differentiation, negatively regulating mitotic clonal expansion. Plays a role in cell-cell adhesion and epithelium development through its interaction with proteins of the beta-catenin family. The sequence is that of Coiled-coil domain-containing protein 85B (ccdc85b) from Danio rerio (Zebrafish).